The following is a 220-amino-acid chain: Thymidylate kinase (220 aa).

10 to 17 (GIDGCGKS) contributes to the ATP binding site.

Belongs to the thymidylate kinase family.

The enzyme catalyses dTMP + ATP = dTDP + ADP. Phosphorylation of dTMP to form dTDP in both de novo and salvage pathways of dTTP synthesis. The polypeptide is Thymidylate kinase (Prochlorococcus marinus (strain SARG / CCMP1375 / SS120)).